The following is a 311-amino-acid chain: Very-long-chain 3-oxoacyl-CoA reductase-B (311 aa).

A helical transmembrane segment spans residues 8–28; that stretch reads LFWVGAVTVLWLSVSSLWSLI. NADP(+) is bound at residue 48–77; sequence GKWAVVTGATDGIGKAYAEELARRGFAIVL. The helical transmembrane segment at 125-145 threads the bilayer; sequence IGVLVNNVGVSYSYPEFFLNI. A substrate-binding site is contributed by S187. The active-site Proton acceptor is the Y200. The helical transmembrane segment at 269–289 threads the bilayer; it reads GYLPHAIMGWVTASLLPAKLL.

Belongs to the short-chain dehydrogenases/reductases (SDR) family. 17-beta-HSD 3 subfamily.

Its subcellular location is the endoplasmic reticulum membrane. The enzyme catalyses a very-long-chain (3R)-3-hydroxyacyl-CoA + NADP(+) = a very-long-chain 3-oxoacyl-CoA + NADPH + H(+). The catalysed reaction is 17beta-estradiol + NAD(+) = estrone + NADH + H(+). It carries out the reaction 17beta-estradiol + NADP(+) = estrone + NADPH + H(+). Its pathway is lipid metabolism; fatty acid biosynthesis. The protein operates within steroid biosynthesis; estrogen biosynthesis. Catalyzes the second of the four reactions of the long-chain fatty acids elongation cycle. This endoplasmic reticulum-bound enzymatic process, allows the addition of two carbons to the chain of long- and very long-chain fatty acids/VLCFAs per cycle. This enzyme has a 3-ketoacyl-CoA reductase activity, reducing 3-ketoacyl-CoA to 3-hydroxyacyl-CoA, within each cycle of fatty acid elongation. Thereby, it may participate in the production of VLCFAs of different chain lengths that are involved in multiple biological processes as precursors of membrane lipids and lipid mediators. May also catalyze the transformation of estrone (E1) into estradiol (E2) and play a role in estrogen formation. The chain is Very-long-chain 3-oxoacyl-CoA reductase-B (hsd17b12b) from Danio rerio (Zebrafish).